A 312-amino-acid chain; its full sequence is MPINIPDDLPAYKVLTAENIFVMNQTRATTQRIRPLKILIVNIMPLKITTETQLLRLLSNTPLQLEVELIHMSTHDSKNVPKEHLLTFYKTFKDIKENSYDGMIITGAPVEQMPFEEVDYWNELSEIFEWAKTHVFSSFFICWASQAALHYYYDIDKYLLKHKLTGVYRHHTNQRKMRRKILRGFDYQFYAPHSRYTTVLKEDISSNPNLDILAESDDAGVYLVASKDGSQFFVTGHPEYDPDTLDKEYKRDKEKPGVIAELPKNYYLDDDPSQEIQVKWRSHAYLLFSNWLNYYVYQETPYDLSDLHERKK.

Catalysis depends on Cys142, which acts as the Acyl-thioester intermediate. Substrate contacts are provided by Lys163 and Ser194. His237 (proton acceptor) is an active-site residue. Glu239 is a catalytic residue. Arg251 contacts substrate.

Belongs to the MetA family.

The protein localises to the cytoplasm. The enzyme catalyses L-homoserine + acetyl-CoA = O-acetyl-L-homoserine + CoA. It participates in amino-acid biosynthesis; L-methionine biosynthesis via de novo pathway; O-acetyl-L-homoserine from L-homoserine: step 1/1. In terms of biological role, transfers an acetyl group from acetyl-CoA to L-homoserine, forming acetyl-L-homoserine. The polypeptide is Homoserine O-acetyltransferase (Catenibacterium mitsuokai (strain DSM 15897 / JCM 10609 / CCUG 48821 A / CIP 106738 / RCA14-39)).